Here is a 310-residue protein sequence, read N- to C-terminus: Aspartate carbamoyltransferase catalytic subunit (310 aa).

Residues arginine 58 and threonine 59 each coordinate carbamoyl phosphate. An L-aspartate-binding site is contributed by lysine 86. Residues arginine 108, histidine 136, and glutamine 139 each contribute to the carbamoyl phosphate site. Residues arginine 169 and arginine 224 each coordinate L-aspartate. 2 residues coordinate carbamoyl phosphate: glycine 265 and proline 266.

Belongs to the aspartate/ornithine carbamoyltransferase superfamily. ATCase family. As to quaternary structure, heterododecamer (2C3:3R2) of six catalytic PyrB chains organized as two trimers (C3), and six regulatory PyrI chains organized as three dimers (R2).

It catalyses the reaction carbamoyl phosphate + L-aspartate = N-carbamoyl-L-aspartate + phosphate + H(+). The protein operates within pyrimidine metabolism; UMP biosynthesis via de novo pathway; (S)-dihydroorotate from bicarbonate: step 2/3. Catalyzes the condensation of carbamoyl phosphate and aspartate to form carbamoyl aspartate and inorganic phosphate, the committed step in the de novo pyrimidine nucleotide biosynthesis pathway. In Geobacter sp. (strain M21), this protein is Aspartate carbamoyltransferase catalytic subunit.